Reading from the N-terminus, the 463-residue chain is Asparagine--tRNA ligase (463 aa).

Belongs to the class-II aminoacyl-tRNA synthetase family. In terms of assembly, homodimer.

It localises to the cytoplasm. The enzyme catalyses tRNA(Asn) + L-asparagine + ATP = L-asparaginyl-tRNA(Asn) + AMP + diphosphate + H(+). The chain is Asparagine--tRNA ligase from Bacillus cereus (strain ATCC 10987 / NRS 248).